The following is a 210-amino-acid chain: MPPYTVVYFPVRGRCAALRMLLADQGQSWKEEVVSMETWQEGSLKASCLYGQLPKFQDGDLTLYQSNTILRHLGRTLGLYGKDQREAALVDMVNDGVEDLRCKYLSLIYTNYEAGKDDYVKALPGQLKPFETLLSQNQGGKTFIVGDQISFADYNLLDLLLIHEVLAPGCLDAFPLLSAYVARLSARPKLKAFLASPEHVNLPINGNGKQ.

The GST N-terminal domain occupies 2–81 (PPYTVVYFPV…HLGRTLGLYG (80 aa)). Tyrosine 4 is subject to Phosphotyrosine; by EGFR. Residues tyrosine 8, arginine 14, tryptophan 39, lysine 45, and 52–53 (QL) contribute to the glutathione site. A Phosphothreonine modification is found at threonine 62. 65 to 66 (QS) serves as a coordination point for glutathione. The GST C-terminal domain occupies 83 to 204 (DQREAALVDM…ASPEHVNLPI (122 aa)). Lysine 103 and lysine 116 each carry N6-succinyllysine. Residue lysine 128 is modified to N6-acetyllysine.

The protein belongs to the GST superfamily. Pi family. As to quaternary structure, homodimer. Interacts with CDK5.

The protein localises to the cytoplasm. The protein resides in the mitochondrion. Its subcellular location is the nucleus. The catalysed reaction is RX + glutathione = an S-substituted glutathione + a halide anion + H(+). It catalyses the reaction prostaglandin J2 + glutathione = prostaglandin J2-S-(R)-glutathione. The enzyme catalyses prostaglandin J2 + glutathione = prostaglandin J2-S-(S)-glutathione. It carries out the reaction prostaglandin A2 + glutathione = prostaglandin A2-S-(S)-glutathione. The catalysed reaction is 11(S)-hydroxy-14(S),15(S)-epoxy-(5Z,8Z,12E)-eicosatrienoate + glutathione = (11S,15S)-dihydroxy-14(R)-S-glutathionyl-(5Z,8Z,12E)-eicosatrienoate. In terms of biological role, conjugation of reduced glutathione to a wide number of exogenous and endogenous hydrophobic electrophiles. Involved in the formation of glutathione conjugates of both prostaglandin A2 (PGA2) and prostaglandin J2 (PGJ2). Participates in the formation of novel hepoxilin regioisomers. Negatively regulates CDK5 activity via p25/p35 translocation to prevent neurodegeneration. The polypeptide is Glutathione S-transferase P (GSTP1) (Pongo abelii (Sumatran orangutan)).